The chain runs to 419 residues: uncharacterized protein (419 aa).

This is an uncharacterized protein from Caenorhabditis elegans.